Consider the following 351-residue polypeptide: Succinylglutamate desuccinylase (351 aa).

Zn(2+)-binding residues include His73, Glu76, and His168. Residue Glu231 is part of the active site.

It belongs to the AspA/AstE family. Succinylglutamate desuccinylase subfamily. Zn(2+) serves as cofactor.

It catalyses the reaction N-succinyl-L-glutamate + H2O = L-glutamate + succinate. The protein operates within amino-acid degradation; L-arginine degradation via AST pathway; L-glutamate and succinate from L-arginine: step 5/5. Functionally, transforms N(2)-succinylglutamate into succinate and glutamate. This chain is Succinylglutamate desuccinylase, found in Burkholderia lata (strain ATCC 17760 / DSM 23089 / LMG 22485 / NCIMB 9086 / R18194 / 383).